Here is a 261-residue protein sequence, read N- to C-terminus: Cytochrome c oxidase subunit 3 (261 aa).

At 1–15 the chain is on the mitochondrial matrix side; it reads MTHQTHAYHMVNPSP. Residues 16–34 form a helical membrane-spanning segment; the sequence is WPLTGALSALLMTSGLAMW. At 35 to 40 the chain is on the mitochondrial intermembrane side; sequence FHFNST. The helical transmembrane segment at 41 to 66 threads the bilayer; it reads ILLMIGLTTNTLTMYQWWRDVIREST. At 67–72 the chain is on the mitochondrial matrix side; it reads FQGHHT. The chain crosses the membrane as a helical span at residues 73 to 105; the sequence is PTVQKGLRYGMILFIISEVLFFTGFFWAFYHSS. Residues 106–128 are Mitochondrial intermembrane-facing; it reads LAPTPELGGCWPPTGIHPLNPLE. The chain crosses the membrane as a helical span at residues 129 to 152; sequence VPLLNTSVLLASGVSITWAHHSLM. Residues 153–155 lie on the Mitochondrial matrix side of the membrane; that stretch reads EGN. The chain crosses the membrane as a helical span at residues 156-183; sequence RYPMLQALFITIALGVYFTLLQASEYYE. Topologically, residues 184 to 190 are mitochondrial intermembrane; the sequence is APFTISD. The chain crosses the membrane as a helical span at residues 191-223; sequence GIYGSTFFVATGFHGLHVIIGSTFLIVCFFRQL. Residues 224 to 232 are Mitochondrial matrix-facing; the sequence is KFHFTSNHH. The helical transmembrane segment at 233–256 threads the bilayer; the sequence is FGFEAAAWYWHFVDVVWLFLYVSI. The Mitochondrial intermembrane segment spans residues 257 to 261; it reads YWWGS.

Belongs to the cytochrome c oxidase subunit 3 family. As to quaternary structure, component of the cytochrome c oxidase (complex IV, CIV), a multisubunit enzyme composed of 14 subunits. The complex is composed of a catalytic core of 3 subunits MT-CO1, MT-CO2 and MT-CO3, encoded in the mitochondrial DNA, and 11 supernumerary subunits COX4I, COX5A, COX5B, COX6A, COX6B, COX6C, COX7A, COX7B, COX7C, COX8 and NDUFA4, which are encoded in the nuclear genome. The complex exists as a monomer or a dimer and forms supercomplexes (SCs) in the inner mitochondrial membrane with NADH-ubiquinone oxidoreductase (complex I, CI) and ubiquinol-cytochrome c oxidoreductase (cytochrome b-c1 complex, complex III, CIII), resulting in different assemblies (supercomplex SCI(1)III(2)IV(1) and megacomplex MCI(2)III(2)IV(2)).

The protein localises to the mitochondrion inner membrane. The catalysed reaction is 4 Fe(II)-[cytochrome c] + O2 + 8 H(+)(in) = 4 Fe(III)-[cytochrome c] + 2 H2O + 4 H(+)(out). Component of the cytochrome c oxidase, the last enzyme in the mitochondrial electron transport chain which drives oxidative phosphorylation. The respiratory chain contains 3 multisubunit complexes succinate dehydrogenase (complex II, CII), ubiquinol-cytochrome c oxidoreductase (cytochrome b-c1 complex, complex III, CIII) and cytochrome c oxidase (complex IV, CIV), that cooperate to transfer electrons derived from NADH and succinate to molecular oxygen, creating an electrochemical gradient over the inner membrane that drives transmembrane transport and the ATP synthase. Cytochrome c oxidase is the component of the respiratory chain that catalyzes the reduction of oxygen to water. Electrons originating from reduced cytochrome c in the intermembrane space (IMS) are transferred via the dinuclear copper A center (CU(A)) of subunit 2 and heme A of subunit 1 to the active site in subunit 1, a binuclear center (BNC) formed by heme A3 and copper B (CU(B)). The BNC reduces molecular oxygen to 2 water molecules using 4 electrons from cytochrome c in the IMS and 4 protons from the mitochondrial matrix. This chain is Cytochrome c oxidase subunit 3 (MT-CO3), found in Raphicerus melanotis (Cape grysbok).